Reading from the N-terminus, the 137-residue chain is Nucleoside diphosphate kinase (137 aa).

K9, F57, R85, T91, R102, and N112 together coordinate ATP. H115 acts as the Pros-phosphohistidine intermediate in catalysis.

Belongs to the NDK family. Homotetramer. Mg(2+) serves as cofactor.

The protein resides in the cytoplasm. It carries out the reaction a 2'-deoxyribonucleoside 5'-diphosphate + ATP = a 2'-deoxyribonucleoside 5'-triphosphate + ADP. It catalyses the reaction a ribonucleoside 5'-diphosphate + ATP = a ribonucleoside 5'-triphosphate + ADP. In terms of biological role, major role in the synthesis of nucleoside triphosphates other than ATP. The ATP gamma phosphate is transferred to the NDP beta phosphate via a ping-pong mechanism, using a phosphorylated active-site intermediate. This chain is Nucleoside diphosphate kinase, found in Leptospira interrogans serogroup Icterohaemorrhagiae serovar Lai (strain 56601).